The sequence spans 158 residues: MGVFTFQDEYTSTIAPAKLYKALVTDADIIIPKAVETIQSVEIVEGNGGPGTIKKLTFIEGGESKYVLHKIEAIDEANLGYNYSIVGGVGLPDTIEKISFETKLVEGANGGSIGKVTIKIETKGDAQPNEEEGKAAKARGDAFFKAIESYLSAHPDYN.

Asp-8 contacts trans-zeatin. The Ca(2+) site is built by Pro-32, Val-35, and Ile-38. Trans-zeatin contacts are provided by Glu-60, His-69, Tyr-81, and Tyr-83. A melatonin-binding site is contributed by Tyr-83.

It belongs to the BetVI family.

Its subcellular location is the cytoplasm. It is found in the cytosol. In terms of biological role, class II ribonuclease (RNase). Binds to several cytokinins including natural adenine-type (e.g. trans-zeatin and kinetin) and artificial urea-type (e.g. N,N'-diphenylurea and N-phenyl-N'-(2-chloro-4-pyridyl)urea) hormones. Interacts with melatonin. This is Class 10 plant pathogenesis-related protein 2B from Lupinus luteus (European yellow lupine).